Consider the following 745-residue polypeptide: Cytoskeleton-associated protein 2-like (745 aa).

Disordered stretches follow at residues 26 to 305, 319 to 362, 422 to 483, and 608 to 638; these read KGKL…VNRV, PATE…LGPQ, FPPQ…TYKR, and EAVTSDTSAAGTNTTSAEELAKEESEQPCPS. Composition is skewed to polar residues over residues 67–89 and 101–136; these read SKTTRPINIKFQTKPASITASQK and GLTSRCFSSNTDCKQSSKPQQQPRAVSFTAGLSRNP. The KEN box motif lies at 183–185; sequence KEN. A compositionally biased stretch (basic and acidic residues) spans 192–202; sequence KPEKPDPELHS. Residue K195 forms a Glycyl lysine isopeptide (Lys-Gly) (interchain with G-Cter in SUMO1); alternate linkage. A Glycyl lysine isopeptide (Lys-Gly) (interchain with G-Cter in SUMO2); alternate cross-link involves residue K195. Composition is skewed to polar residues over residues 205-216, 224-233, 242-253, and 284-301; these read KPNTGSSNQTQK, LSKSSVTQTA, FIRNTQIRTQAV, and NKTQTSKKPMTKNTQDIT. Positions 427 to 442 are enriched in polar residues; sequence HFLNKTAPRTQASTAA. Positions 459 to 475 are enriched in basic and acidic residues; sequence KKPEGEDRRKQLEEWQK. Over residues 608-624 the composition is skewed to polar residues; it reads EAVTSDTSAAGTNTTSA. Position 745 is a phosphoserine (S745).

The protein belongs to the CKAP2 family. Ubiquitinated by the anaphase promoting complex/cyclosome (APC/C). In terms of tissue distribution, highly expressed in regions of active neurogenesis and neural stem/progenitor cells (NSPCs), both embryonic and adult, not detected in lung, liver, kidney, heart, and skeletal muscle.

Its subcellular location is the cytoplasm. It is found in the cytoskeleton. The protein resides in the spindle pole. Microtubule-associated protein required for mitotic spindle formation and cell-cycle progression in neural progenitor cells. This is Cytoskeleton-associated protein 2-like (Ckap2l) from Mus musculus (Mouse).